The following is a 356-amino-acid chain: Manganese-dependent ADP-ribose/CDP-alcohol diphosphatase (356 aa).

Residues aspartate 32, glutamine 34, aspartate 81, asparagine 117, histidine 253, histidine 290, and histidine 292 each coordinate Zn(2+).

The protein belongs to the ADPRibase-Mn family. In terms of assembly, monomer. Requires Mg(2+) as cofactor.

The catalysed reaction is CDP-choline + H2O = phosphocholine + CMP + 2 H(+). It carries out the reaction ADP-D-ribose + H2O = D-ribose 5-phosphate + AMP + 2 H(+). It catalyses the reaction CDP-glycerol + H2O = sn-glycerol 3-phosphate + CMP + 2 H(+). Hydrolyzes ADP-ribose, IDP-ribose, CDP-glycerol, CDP-choline and CDP-ethanolamine, but not other non-reducing ADP-sugars or CDP-glucose. In Xenopus laevis (African clawed frog), this protein is Manganese-dependent ADP-ribose/CDP-alcohol diphosphatase (adprm).